A 530-amino-acid chain; its full sequence is uncharacterized protein (530 aa).

Positions 485–529 form a coiled coil; the sequence is SKEENREIKLSIRENKEKQRKKSVEKSVSKLQNQLNRLLNKNTIE.

This is an uncharacterized protein from Acanthamoeba polyphaga (Amoeba).